The sequence spans 92 residues: Small ribosomal subunit protein bS20 (92 aa).

The segment at 1–25 (MANSAQARKRARQAAKANSHNSALR) is disordered.

It belongs to the bacterial ribosomal protein bS20 family.

Functionally, binds directly to 16S ribosomal RNA. This Paraburkholderia phymatum (strain DSM 17167 / CIP 108236 / LMG 21445 / STM815) (Burkholderia phymatum) protein is Small ribosomal subunit protein bS20.